Consider the following 286-residue polypeptide: 4-diphosphocytidyl-2-C-methyl-D-erythritol kinase (286 aa).

Lysine 11 is an active-site residue. 93–103 lines the ATP pocket; that stretch reads PFGAGLGGGSS. Aspartate 135 is a catalytic residue.

It belongs to the GHMP kinase family. IspE subfamily.

It carries out the reaction 4-CDP-2-C-methyl-D-erythritol + ATP = 4-CDP-2-C-methyl-D-erythritol 2-phosphate + ADP + H(+). It participates in isoprenoid biosynthesis; isopentenyl diphosphate biosynthesis via DXP pathway; isopentenyl diphosphate from 1-deoxy-D-xylulose 5-phosphate: step 3/6. Functionally, catalyzes the phosphorylation of the position 2 hydroxy group of 4-diphosphocytidyl-2C-methyl-D-erythritol. The sequence is that of 4-diphosphocytidyl-2-C-methyl-D-erythritol kinase from Prosthecochloris aestuarii (strain DSM 271 / SK 413).